The following is a 120-amino-acid chain: Secreted RxLR effector protein 29 (120 aa).

Positions 1-21 (MRRTAFIVLSLVALIAPCVTS) are cleaved as a signal peptide. The short motif at 47 to 64 (RHLRSEANGRLAVVDEEK) is the RxLR-dEER element.

Belongs to the RxLR effector family.

It localises to the secreted. It is found in the host cytoplasm. Its subcellular location is the host nucleus. Its function is as follows. Effector that acts as a broad suppressor of cell death to interrupt plant immunity. Inhibits cell death induced by cell death-inducing proteins, including the PAMP elicitor INF1 from P.infestans. The polypeptide is Secreted RxLR effector protein 29 (Plasmopara viticola (Downy mildew of grapevine)).